The chain runs to 397 residues: Lysophospholipid transporter LplT (397 aa).

At 1 to 17 (MSESVHTNTSLWSKGMK) the chain is on the periplasmic side. A helical membrane pass occupies residues 18-38 (AVIVAQFLSAFGDNALLFATL). The Cytoplasmic segment spans residues 39–52 (ALLKAQFYPEWSQP). The chain crosses the membrane as a helical span at residues 53-73 (ILQMVFVGAYILFAPFVGQVA). The Periplasmic segment spans residues 74 to 90 (DSFAKGRVMMFANGLKL). Residues 91-111 (LGAASICFGINPFLGYTLVGV) form a helical membrane-spanning segment. Topologically, residues 112-144 (GAAAYSPAKYGILGELTTGSKLVKANGLMEAST) are cytoplasmic. Residues 145 to 165 (IAAILLGSVAGGVLADWHVLV) traverse the membrane as a helical segment. Position 166 (Ala-166) is a topological domain, periplasmic. Residues 167–187 (LAACALAYGGAVVANIYIPKL) traverse the membrane as a helical segment. The Cytoplasmic segment spans residues 188 to 226 (AAARPGQSWNLINMTRSFLNACTSLWRNGETRFSLVGTS). A helical transmembrane segment spans residues 227-247 (LFWGAGVTLRFLLVLWVPVAL). Residues 248–256 (GITDNATPT) are Periplasmic-facing. Residues 257–277 (YLNAMVAIGIVVGAGAAAKLV) traverse the membrane as a helical segment. Residues 278-280 (TLE) lie on the Cytoplasmic side of the membrane. Residues 281-301 (TMSRCMPAGILIGVVVLIFSL) traverse the membrane as a helical segment. Over 302–304 (QHE) the chain is Periplasmic. The helical transmembrane segment at 305-325 (LLPAYALLMLIGVMGGFFVVP) threads the bilayer. The Cytoplasmic segment spans residues 326–343 (LNALLQERGKKSVGAGNA). A helical membrane pass occupies residues 344 to 364 (IAVQNLGENSAMLLMLGIYSL). The Periplasmic segment spans residues 365-366 (AV). Residues 367 to 387 (MVGIPVVPIGIGFGALFALAI) form a helical membrane-spanning segment. Over 388 to 397 (TALWIWQRRH) the chain is Cytoplasmic.

It belongs to the major facilitator superfamily. LplT (TC 2.A.1.42) family.

Its subcellular location is the cell inner membrane. Functionally, catalyzes the facilitated diffusion of 2-acyl-glycero-3-phosphoethanolamine (2-acyl-GPE) into the cell. This chain is Lysophospholipid transporter LplT, found in Shigella sonnei (strain Ss046).